We begin with the raw amino-acid sequence, 411 residues long: Adherens junction-associated protein 1 (411 aa).

An N-terminal signal peptide occupies residues 1–43 (MWIQQLLGLSSMPIRWPGRSLGSHLWILIAMLQLAVDFPSCDS). At 44–283 (LGPGPEFRLL…GETSGLAVHQ (240 aa)) the chain is on the extracellular side. Low complexity-rich tracts occupy residues 62–76 (LWSLRTGPPTRLPTP), 121–145 (PPAATRSSPSLTSASASSSMTAGAA), and 247–264 (TPVGVSTTEPSTSPSNNG). 2 disordered regions span residues 62-156 (LWSL…RGRR) and 242-270 (DPWKRTPVGVSTTEPSTSPSNNGKDIQPP). Residues 284–304 (IITITVSLIMVIAALITTLVL) traverse the membrane as a helical segment. Positions 304 to 411 (LKNCCAPSGH…VSEKWFEISC (108 aa)) are targeting signals. Over 305-411 (KNCCAPSGHT…VSEKWFEISC (107 aa)) the chain is Cytoplasmic.

As to quaternary structure, forms a complex with CDH1 and CTNNB1; interacts directly with CTNNB1. Interacts with AP1M2 and with isoform 2 of BSG/CD147.

Its subcellular location is the basolateral cell membrane. The protein localises to the apical cell membrane. It is found in the cell junction. The protein resides in the adherens junction. Its function is as follows. Plays a role in cell adhesion and cell migration. The chain is Adherens junction-associated protein 1 (Ajap1) from Rattus norvegicus (Rat).